Consider the following 61-residue polypeptide: Protein translocase subunit SecE (61 aa).

Residues 38 to 58 (GIGMILIGLIGLVIRMIGYLI) traverse the membrane as a helical segment.

The protein belongs to the SecE/SEC61-gamma family. Component of the Sec protein translocase complex. Heterotrimer consisting of SecY (alpha), SecG (beta) and SecE (gamma) subunits. The heterotrimers can form oligomers, although 1 heterotrimer is thought to be able to translocate proteins. Interacts with the ribosome. May interact with SecDF, and other proteins may be involved.

The protein resides in the cell membrane. Functionally, essential subunit of the Sec protein translocation channel SecYEG. Clamps together the 2 halves of SecY. May contact the channel plug during translocation. The protein is Protein translocase subunit SecE of Thermococcus onnurineus (strain NA1).